The sequence spans 118 residues: Beta-2-microglobulin (118 aa).

The N-terminal stretch at 1–20 is a signal peptide; it reads MARVVALVLLGLLSLTGLEA. One can recognise an Ig-like C1-type domain in the interval 22 to 115; it reads PRVPKVQVYS…LKDPLIVKWD (94 aa). The cysteines at positions 45 and 99 are disulfide-linked.

It belongs to the beta-2-microglobulin family. As to quaternary structure, heterodimer of an alpha chain and a beta chain. Beta-2-microglobulin is the beta-chain of major histocompatibility complex class I molecules.

It localises to the secreted. Functionally, component of the class I major histocompatibility complex (MHC). Involved in the presentation of peptide antigens to the immune system. The chain is Beta-2-microglobulin (B2M) from Equus caballus (Horse).